The sequence spans 257 residues: Ribonuclease HII (257 aa).

The RNase H type-2 domain occupies 72-257 (TYIAGIDEVG…FAPIKDMIQK (186 aa)). Residues Asp-78, Glu-79, and Asp-170 each contribute to the a divalent metal cation site.

It belongs to the RNase HII family. Mn(2+) is required as a cofactor. Mg(2+) serves as cofactor.

The protein localises to the cytoplasm. It catalyses the reaction Endonucleolytic cleavage to 5'-phosphomonoester.. Endonuclease that specifically degrades the RNA of RNA-DNA hybrids. This chain is Ribonuclease HII, found in Bacillus mycoides (strain KBAB4) (Bacillus weihenstephanensis).